The primary structure comprises 71 residues: Small ribosomal subunit protein bS21 (71 aa).

This sequence belongs to the bacterial ribosomal protein bS21 family.

The polypeptide is Small ribosomal subunit protein bS21 (Hahella chejuensis (strain KCTC 2396)).